The following is a 462-amino-acid chain: MTTEIRALYTRLPAIDRLLRDPAFSPLLAQHGHSQVVAQLRQMLDEAREQISQRQTLPDWSHDWQHACEQRLTAGQRSALRPVFNLTGTVLHTNLGRAIQAESAVEAVASAMRAPVTLEYDLDDAGRGHRDRAIADLLCQITGAEDACIVNNNAAAVLLMLAATASGREVVVSRGELVEIGGAFRIPDVMRQAGCQLHEVGTTNRTHAKDYRQAVNDNTALLMKVHTSNYSIEGFTKAVDEAELAAIGRELDVPVVADLGSGSLVDLSQYGLPKEPMPQEMIAAGVSLVSFSGDKLLGGPQAGIIVGKRALIAQLQSHPLKRALRADKMTLAALEATLRLYQHPEALREKLPTLRLLTRPAEEIRRLAERLQPDLAAHYADFAVSVAACQSQIGSGSLPVDRLPSAALTFTPHDGRGSRLEALAARWRALPCPVIGRIYDGRLWLDLRCLEDETRFMEMLLR.

At lysine 295 the chain carries N6-(pyridoxal phosphate)lysine.

It belongs to the SelA family. Homodecamer; pentamer of dimers. Binds only one seryl-tRNA(Sec) per dimer. The cofactor is pyridoxal 5'-phosphate.

The protein localises to the cytoplasm. The enzyme catalyses L-seryl-tRNA(Sec) + selenophosphate + H(+) = L-selenocysteinyl-tRNA(Sec) + phosphate. It participates in aminoacyl-tRNA biosynthesis; selenocysteinyl-tRNA(Sec) biosynthesis; selenocysteinyl-tRNA(Sec) from L-seryl-tRNA(Sec) (bacterial route): step 1/1. Converts seryl-tRNA(Sec) to selenocysteinyl-tRNA(Sec) required for selenoprotein biosynthesis. This Klebsiella pneumoniae subsp. pneumoniae (strain ATCC 700721 / MGH 78578) protein is L-seryl-tRNA(Sec) selenium transferase.